The sequence spans 314 residues: MKAIESIPDRKLLLFKSCMVGQEYPGIETATSYVFDRLGVDYCINDEQSCCTGIGHYTDVFEGLTTAAIAARNFAVARKCGYPNITCLCSTCYAINKDACELLNTNDGVREKVNSIFREKGFDDLVYEKDSMNPRTNIYHAVEVLLSKVEKIREEIKFDFPGVKAASHHACHYYKVKYLDVIGNPENPQLIDTIAEACGASPVRWYEDRTLTCGMGFSQLHLNKSTSLQVTKTKLDSLQRAGVELMIHMCPNCHIQYDRYQPVIEKEFGVEYDMVHMNIAQFVALSMGADPYKVCGFQTHSVPLEGFLEKTGII.

The protein belongs to the HdrB family. As to quaternary structure, the ferredoxin:CoB-CoM heterodisulfide reductase is composed of three subunits; HdrA1, HdrB1 and HdrC1. The cofactor is [4Fe-4S] cluster.

The protein localises to the cytoplasm. It carries out the reaction coenzyme B + coenzyme M + 2 oxidized [2Fe-2S]-[ferredoxin] = coenzyme M-coenzyme B heterodisulfide + 2 reduced [2Fe-2S]-[ferredoxin] + 2 H(+). It functions in the pathway cofactor metabolism; coenzyme M-coenzyme B heterodisulfide reduction; coenzyme B and coenzyme M from coenzyme M-coenzyme B heterodisulfide: step 1/1. Part of a complex that catalyzes the reversible reduction of CoM-S-S-CoB to the thiol-coenzymes H-S-CoM (coenzyme M) and H-S-CoB (coenzyme B). Probably involved in methylotrophic methanogenesis but not in aceticlastic methanogenesis. In Methanosarcina acetivorans (strain ATCC 35395 / DSM 2834 / JCM 12185 / C2A), this protein is Ferredoxin:CoB-CoM heterodisulfide reductase subunit B.